The chain runs to 109 residues: MAGHTENEIVIAAPLDLVWDMTNDVENWPRLFSEYASAEILEREGDRVRFRLTMHPDDEGRVWSWVSERVADRASLTVRAHRVETGPFQFMDIQWVYEQTPEGVLMRWI.

It to polyketide cyclases.

Its function is as follows. Involved in developmentally regulated synthesis of a compound biosynthetically related to polyketide antibiotics which is essential for spore color in Streptomyces halstedii. The chain is Putative polyketide cyclase (sch4) from Streptomyces halstedii.